A 573-amino-acid polypeptide reads, in one-letter code: Probable D-xylulose kinase A (573 aa).

Positions 100, 171, 287, and 288 each coordinate substrate. ATP-binding positions include Trp-368, 473 to 474 (GG), and Asn-477.

The protein belongs to the FGGY kinase family.

The protein resides in the cytoplasm. It catalyses the reaction D-xylulose + ATP = D-xylulose 5-phosphate + ADP + H(+). Highly specific D-xylulose kinase which participates in the catabolism of xylose. Xylose is a major component of hemicelluloses such as xylan. Most fungi utilize D-xylose via three enzymatic reactions, xylose reductase (XR), xylitol dehydrogenase (XDH), and xylulokinase, to form xylulose 5-phosphate, which enters pentose phosphate pathway. The protein is Probable D-xylulose kinase A (xkiA) of Aspergillus terreus (strain NIH 2624 / FGSC A1156).